A 239-amino-acid chain; its full sequence is uncharacterized protein (239 aa).

This is an uncharacterized protein from Homo sapiens (Human).